The chain runs to 415 residues: Probable G-protein coupled receptor 19 (415 aa).

At 1–69 (MVFAHRMDNS…LKPGEVATAS (69 aa)) the chain is on the extracellular side. 2 N-linked (GlcNAc...) asparagine glycosylation sites follow: asparagine 25 and asparagine 52. The chain crosses the membrane as a helical span at residues 70–90 (IFFGILWLFSIFGNSLVCLVI). Residues 91 to 102 (HRSRRTQSTTNY) lie on the Cytoplasmic side of the membrane. A helical transmembrane segment spans residues 103 to 123 (FVVSMACADLLISVASTPFVL). Residues 124–143 (LQFTTGRWTLGSATCKVVRY) lie on the Extracellular side of the membrane. The cysteines at positions 138 and 210 are disulfide-linked. Residues 144–161 (FQYLTPGVQIYVLLSICI) traverse the membrane as a helical segment. Over 162–182 (DRFYTIVYPLSFKVSREKAKK) the chain is Cytoplasmic. Residues 183-203 (MIAASWVFDAGFVTPVLFFYG) traverse the membrane as a helical segment. Over 204-221 (SNWDSHCNYFLPSSWEGT) the chain is Extracellular. The chain crosses the membrane as a helical span at residues 222–242 (AYTVIHFLVGFVIPSVLIILF). The Cytoplasmic segment spans residues 243 to 277 (YQKVIKYIWRIGTDGRTVRRTMNIVPRTKVKTIKM). Residues 278-298 (FLILNLLFLLSWLPFHVAQLW) traverse the membrane as a helical segment. Topologically, residues 299–309 (HPHEQDYKKSS) are extracellular. Residues 310–325 (LVFTAITWISFSSSAS) form a helical membrane-spanning segment. Topologically, residues 326–415 (KPTLYSIYNA…INSNPPNTFV (90 aa)) are cytoplasmic.

Belongs to the G-protein coupled receptor 1 family. As to expression, abundant expression in the brain.

The protein resides in the cell membrane. Its function is as follows. G-protein coupled receptor that plays a role in the regulation of circadian rhythms and energy metabolism. Participates in maintaining proper circadian gene expression in the suprachiasmatic nucleus (SCN), the locus of the master circadian clock in the brain. May function as a coordinator of aging-associated metabolic dysfunction, stress response, DNA integrity management, and eventual senescence. Upon binding to adropin, modulates mitochondrial energy metabolism via the p44/42-PDK4 signaling pathway, influencing pyruvate dehydrogenase activity. The chain is Probable G-protein coupled receptor 19 (GPR19) from Homo sapiens (Human).